The sequence spans 451 residues: METNQILETIRMIEEEKLDIRTITMGISLLDCMDGDGEAARKKIYQKIVTKARNLVAVGEAIESEFGIPIINKRISVTPIAIIAGSSADTDYVEFAKTLDAAAKEVGVNFIGGYSALVQKGYTKGDEILIRSIPQALAQTERVCSSVNVGSTRTGINMDAVRQMGEVIKETADLTADTQGLGCAKLVVFANAVEDNPFMAGAFHGVGEADCVINVGVSGPGVVKRAIEKVKGEPFDIVAETVKQTAFKITRMGQLVGQVASEKLGVPFGIVDLSLAPTPAIGDSVAHILEEMGLEMVGTHGTTAALALLNDAVKKGGVMACGHVGGLSGAFIPVSEDAGMIEAVQQGALNLEKLEAMTAICSVGLDMIAVPGDTTAETLAAMIADEAAIGVINNKTTAVRVIPASGTKVGDMVEFGGLLGTAPVMPVNGKSSVDFIARGGRIPAPIHSFKN.

The protein belongs to the UPF0210 family. In terms of assembly, homodimer.

The polypeptide is UPF0210 protein lmo0534 (Listeria monocytogenes serovar 1/2a (strain ATCC BAA-679 / EGD-e)).